The sequence spans 133 residues: Small ribosomal subunit protein bS6 (133 aa).

This sequence belongs to the bacterial ribosomal protein bS6 family.

In terms of biological role, binds together with bS18 to 16S ribosomal RNA. This is Small ribosomal subunit protein bS6 from Borrelia turicatae (strain 91E135).